The primary structure comprises 216 residues: Homeobox-leucine zipper protein ATHB-40 (216 aa).

Residues 28-52 form a disordered region; sequence GEVKQPKRRRKKTKGSVASADGGNG. The homeobox DNA-binding region spans 52–111; that stretch reads GLFRKRKLTDEQVNMLEMSFGDEHKLESERKDRLAAELGLDPRQVAVWFQNRRARWKNKR. Positions 112 to 140 are leucine-zipper; sequence LEEEYNKLKNSHDNVVVDKCRLESEVIQL.

The protein belongs to the HD-ZIP homeobox family. Class I subfamily. As to expression, expressed in roots, flowers and siliques.

Its subcellular location is the nucleus. In terms of biological role, probable transcription factor. In Arabidopsis thaliana (Mouse-ear cress), this protein is Homeobox-leucine zipper protein ATHB-40 (ATHB-40).